A 1843-amino-acid polypeptide reads, in one-letter code: Nonribosomal peptide synthetase SIDD (1843 aa).

The disordered stretch occupies residues 1–83 (MLSIDDHGGG…QQQQQQQQRS (83 aa)). Residues 65–81 (QQQQQQQQQQQQQQQQQ) are compositionally biased toward low complexity. Positions 133–528 (TYSELEHLST…TEVEHHIQTC (396 aa)) are adenylation 1. Positions 628–647 (KLGATHADEGPQEEPETDAE) are disordered. The 76-residue stretch at 641 to 716 (EPETDAEKKL…AMANKSTSIS (76 aa)) folds into the Carrier 1 domain. An O-(pantetheine 4'-phosphoryl)serine modification is found at S677. The condensation 1 stretch occupies residues 753–1175 (VEDVYPCTPL…ALSDDDAAAL (423 aa)). Positions 1289-1365 (SATSQRQRRL…EMAAVMECTD (77 aa)) constitute a Carrier 2 domain. S1326 bears the O-(pantetheine 4'-phosphoryl)serine mark. The condensation 2 stretch occupies residues 1447–1734 (FFDGPVDLRR…LREIAENCGL (288 aa)).

This sequence belongs to the NRP synthetase family. The cofactor is pantetheine 4'-phosphate.

It functions in the pathway siderophore biosynthesis. In terms of biological role, nonribosomal peptide synthetase; part of the gene cluster that mediates the biosynthesis of at least 11 siderophores, including beauverichelin A, dimerumic acid (DA), Na-dimethyl coprogen (NADC), eleutherazine B, ferricrocin (FC), fusarinine A, fusarinine C (FsC), metachelin A, mevalonolactone, rhodotorulic acid (RA) and tenellin. This cocktail of siderophores for iron metabolism is essential for virulence, and more specifically for the fungal virulence in penetrating through the host cuticle. Siderophore synthesis is also involved in conidial germination under iron-deficient conditions. SIDC catalyzes the assembly of ferricrocin whereas SIDD catalyzes the assembly of fusarinine C. This Beauveria bassiana (strain ARSEF 2860) (White muscardine disease fungus) protein is Nonribosomal peptide synthetase SIDD.